We begin with the raw amino-acid sequence, 268 residues long: Probable membrane transporter protein HI_0806 (268 aa).

Transmembrane regions (helical) follow at residues 6 to 26 (IFIL…FGIG), 46 to 66 (VISA…LLFF), 79 to 99 (ILWS…SFYF), 101 to 121 (TAII…KTFL), 147 to 167 (GGGL…APLV), 178 to 198 (IAVY…YGYL), 212 to 232 (LGLN…MSFF), and 248 to 268 (LLAI…FVFH).

It belongs to the 4-toluene sulfonate uptake permease (TSUP) (TC 2.A.102) family.

It localises to the cell membrane. The protein is Probable membrane transporter protein HI_0806 of Haemophilus influenzae (strain ATCC 51907 / DSM 11121 / KW20 / Rd).